Reading from the N-terminus, the 321-residue chain is F-box protein At4g35930 (321 aa).

Over residues 1–13 (MGKVSPKDLDSKT) the composition is skewed to basic and acidic residues. The tract at residues 1–23 (MGKVSPKDLDSKTSVRKKKLKSS) is disordered. The F-box domain maps to 159-207 (ESQLESLPMDLLVKIVCHLHHDQLKAVFHVSQRIRMATILARQYHFNYT). The tract at residues 228–258 (WPFRRGDGNPTMVSSPHTPKAPKHAPRPPSR) is disordered.

The sequence is that of F-box protein At4g35930 from Arabidopsis thaliana (Mouse-ear cress).